A 194-amino-acid polypeptide reads, in one-letter code: Phosphoheptose isomerase (194 aa).

The 156-residue stretch at 31–186 (ICQRFQAGNK…CEQVESRLFA (156 aa)) folds into the SIS domain. Position 46-48 (46-48 (NGG)) interacts with substrate. The Zn(2+) site is built by H55 and E59. Residues E59, 88-89 (ND), 114-116 (STS), S119, and Q166 each bind substrate. Zn(2+)-binding residues include Q166 and H174.

This sequence belongs to the SIS family. GmhA subfamily. Zn(2+) is required as a cofactor.

Its subcellular location is the cytoplasm. The enzyme catalyses 2 D-sedoheptulose 7-phosphate = D-glycero-alpha-D-manno-heptose 7-phosphate + D-glycero-beta-D-manno-heptose 7-phosphate. The protein operates within carbohydrate biosynthesis; D-glycero-D-manno-heptose 7-phosphate biosynthesis; D-glycero-alpha-D-manno-heptose 7-phosphate and D-glycero-beta-D-manno-heptose 7-phosphate from sedoheptulose 7-phosphate: step 1/1. Its function is as follows. Catalyzes the isomerization of sedoheptulose 7-phosphate in D-glycero-D-manno-heptose 7-phosphate. This is Phosphoheptose isomerase from Synechocystis sp. (strain ATCC 27184 / PCC 6803 / Kazusa).